Here is a 702-residue protein sequence, read N- to C-terminus: Polyribonucleotide nucleotidyltransferase (702 aa).

Mg(2+) contacts are provided by aspartate 486 and aspartate 492. Residues 553–612 enclose the KH domain; the sequence is PSMATIKIDPEKIRDVIGKGGATIRSITEQTGASIDLDDDGTVRIYAADKASSDAALLKI. Residues 622–690 enclose the S1 motif domain; sequence DKLYKGKVVR…ARGRIKLSMK (69 aa).

The protein belongs to the polyribonucleotide nucleotidyltransferase family. Component of the RNA degradosome, which is a multiprotein complex involved in RNA processing and mRNA degradation. Mg(2+) serves as cofactor.

It is found in the cytoplasm. The catalysed reaction is RNA(n+1) + phosphate = RNA(n) + a ribonucleoside 5'-diphosphate. Involved in mRNA degradation. Catalyzes the phosphorolysis of single-stranded polyribonucleotides processively in the 3'- to 5'-direction. This is Polyribonucleotide nucleotidyltransferase from Marinomonas sp. (strain MWYL1).